The sequence spans 160 residues: SUMO-conjugating enzyme SCE1 (160 aa).

Position 2 is an N-acetylalanine (Ala-2). Positions Ile-5–Ala-158 constitute a UBC core domain. Cys-94 serves as the catalytic Glycyl thioester intermediate.

This sequence belongs to the ubiquitin-conjugating enzyme family. In terms of assembly, interacts with SIZ1 (via PHD domain) and MMS21. Interacts with TCP14 and TCP15. Interacts with KIN10.

Its pathway is protein modification; protein sumoylation. In terms of biological role, SUMO-conjugating enzyme that accepts the SUMO proteins from the E1 SUMO-activating heterodimer SAE1/SAE2 and catalyzes its covalent attachment to other proteins with the E3 SUMO ligases SIZ1 and MMS21. Associates with SIZ1 for sumoylation of the transcription factor GTE3. This Arabidopsis thaliana (Mouse-ear cress) protein is SUMO-conjugating enzyme SCE1 (SCE1).